Consider the following 346-residue polypeptide: Protein RecA (346 aa).

65–72 serves as a coordination point for ATP; that stretch reads GPESSGKT.

Belongs to the RecA family.

The protein resides in the cytoplasm. In terms of biological role, can catalyze the hydrolysis of ATP in the presence of single-stranded DNA, the ATP-dependent uptake of single-stranded DNA by duplex DNA, and the ATP-dependent hybridization of homologous single-stranded DNAs. It interacts with LexA causing its activation and leading to its autocatalytic cleavage. The sequence is that of Protein RecA from Enterococcus hirae (strain ATCC 9790 / DSM 20160 / JCM 8729 / LMG 6399 / NBRC 3181 / NCIMB 6459 / NCDO 1258 / NCTC 12367 / WDCM 00089 / R).